Consider the following 96-residue polypeptide: Co-chaperonin GroES (96 aa).

Belongs to the GroES chaperonin family. As to quaternary structure, heptamer of 7 subunits arranged in a ring. Interacts with the chaperonin GroEL.

It is found in the cytoplasm. Together with the chaperonin GroEL, plays an essential role in assisting protein folding. The GroEL-GroES system forms a nano-cage that allows encapsulation of the non-native substrate proteins and provides a physical environment optimized to promote and accelerate protein folding. GroES binds to the apical surface of the GroEL ring, thereby capping the opening of the GroEL channel. This chain is Co-chaperonin GroES, found in Thiobacillus denitrificans (strain ATCC 25259 / T1).